Reading from the N-terminus, the 89-residue chain is Small ribosomal subunit protein uS15 (89 aa).

It belongs to the universal ribosomal protein uS15 family. Part of the 30S ribosomal subunit. Forms a bridge to the 50S subunit in the 70S ribosome, contacting the 23S rRNA.

One of the primary rRNA binding proteins, it binds directly to 16S rRNA where it helps nucleate assembly of the platform of the 30S subunit by binding and bridging several RNA helices of the 16S rRNA. Functionally, forms an intersubunit bridge (bridge B4) with the 23S rRNA of the 50S subunit in the ribosome. This is Small ribosomal subunit protein uS15 from Vibrio vulnificus (strain YJ016).